Here is a 94-residue protein sequence, read N- to C-terminus: MLTINAVIRKDQGKGASRRLRLANKFPAIVYGGTKAPVAIELDHDIVLNTQTKEGFYTDVLALVIDGKESKVKVQAVQRHSFKPKLTHIDFVRA.

This sequence belongs to the bacterial ribosomal protein bL25 family. As to quaternary structure, part of the 50S ribosomal subunit; part of the 5S rRNA/L5/L18/L25 subcomplex. Contacts the 5S rRNA. Binds to the 5S rRNA independently of L5 and L18.

Functionally, this is one of the proteins that binds to the 5S RNA in the ribosome where it forms part of the central protuberance. The sequence is that of Large ribosomal subunit protein bL25 from Sodalis glossinidius (strain morsitans).